Consider the following 529-residue polypeptide: Beta-galactoside alpha-2,6-sialyltransferase 2 (529 aa).

Over 1 to 11 the chain is Cytoplasmic; that stretch reads MKPHLKQWRQR. A helical; Signal-anchor for type II membrane protein transmembrane segment spans residues 12–32; it reads MLFGIFAWGLLFLLIFIYFTD. Topologically, residues 33–529 are lumenal; it reads SNPAEPVPSS…PAPSPVIPHS (497 aa). An O-linked (GalNAc...) serine glycan is attached at serine 69. Asparagine 211 carries an N-linked (GlcNAc...) asparagine glycan. Intrachain disulfides connect cysteine 253/cysteine 519, cysteine 296/cysteine 448, and cysteine 466/cysteine 477.

This sequence belongs to the glycosyltransferase 29 family. Post-translationally, O-glycosylated. In terms of tissue distribution, weakly expressed in some tissues, such as small intestine, colon and fetal brain.

It localises to the golgi apparatus. Its subcellular location is the golgi stack membrane. It carries out the reaction a beta-D-galactoside + CMP-N-acetyl-beta-neuraminate = an N-acetyl-alpha-neuraminyl-(2-&gt;6)-beta-D-galactosyl derivative + CMP + H(+). Transfers sialic acid from the donor of substrate CMP-sialic acid to galactose containing acceptor substrates. Has alpha-2,6-sialyltransferase activity toward oligosaccharides that have the Gal-beta-1,4-GlcNAc sequence at the non-reducing end of their carbohydrate groups, but it has weak or no activities toward glycoproteins and glycolipids. The sequence is that of Beta-galactoside alpha-2,6-sialyltransferase 2 (ST6GAL2) from Homo sapiens (Human).